Consider the following 407-residue polypeptide: RNA-binding motif, single-stranded-interacting protein 2 (407 aa).

Residue Met1 is modified to N-acetylmethionine. The segment at 29–54 is disordered; that stretch reads QQMAPPSPSNSTPNSSSGSNGNDQLS. The span at 37–50 shows a compositional bias: low complexity; sequence SNSTPNSSSGSNGN. RRM domains follow at residues 56 to 129 and 135 to 220; these read TNLY…MAKQ and TNLY…FADG. Ser106 is modified (phosphoserine). Thr269 is subject to Phosphothreonine. Ser280 and Ser285 each carry phosphoserine.

It localises to the nucleus. This is RNA-binding motif, single-stranded-interacting protein 2 (RBMS2) from Homo sapiens (Human).